The chain runs to 1802 residues: Protein TIC 214 (1802 aa).

Transmembrane regions (helical) follow at residues 19–39, 68–88, 91–111, 133–153, 176–196, and 227–247; these read IINSVVVVGLYYGFLTTFSIG, FIAGQLMMFISIYYAPLHLAL, PHTITVLALPYLLFHFFWNNH, VFLNNLIFQLFNHFILPSSML, VGWLIGHILFMKWVGLVLVWI, and IFSILLFITCVYYLGRIPSPI.

Belongs to the TIC214 family. In terms of assembly, part of the Tic complex.

The protein resides in the plastid. Its subcellular location is the chloroplast inner membrane. Its function is as follows. Involved in protein precursor import into chloroplasts. May be part of an intermediate translocation complex acting as a protein-conducting channel at the inner envelope. The polypeptide is Protein TIC 214 (Nasturtium officinale (Watercress)).